Here is a 376-residue protein sequence, read N- to C-terminus: Alcohol dehydrogenase class-3 (376 aa).

N-acetylserine is present on S1. Zn(2+)-binding residues include C47, H69, C99, C102, C105, C113, and C176.

It belongs to the zinc-containing alcohol dehydrogenase family. Class-III subfamily. Homodimer. The cofactor is Zn(2+). Liver and gut.

It localises to the cytoplasm. The catalysed reaction is a primary alcohol + NAD(+) = an aldehyde + NADH + H(+). The enzyme catalyses a secondary alcohol + NAD(+) = a ketone + NADH + H(+). It catalyses the reaction S-(hydroxymethyl)glutathione + NADP(+) = S-formylglutathione + NADPH + H(+). It carries out the reaction S-(hydroxymethyl)glutathione + NAD(+) = S-formylglutathione + NADH + H(+). The catalysed reaction is S-nitrosoglutathione + NADH + H(+) = S-(hydroxysulfenamide)glutathione + NAD(+). Its function is as follows. Class-III ADH is remarkably ineffective in oxidizing ethanol, but it readily catalyzes the oxidation of long-chain primary alcohols and the oxidation of S-(hydroxymethyl) glutathione. Also acts as a S-nitroso-glutathione reductase by catalyzing the NADH-dependent reduction of S-nitrosoglutathione, thereby regulating protein S-nitrosylation. This chain is Alcohol dehydrogenase class-3, found in Myxine glutinosa (Atlantic hagfish).